Here is a 73-residue protein sequence, read N- to C-terminus: UPF0346 protein SSP1318 (73 aa).

The protein belongs to the UPF0346 family.

The chain is UPF0346 protein SSP1318 from Staphylococcus saprophyticus subsp. saprophyticus (strain ATCC 15305 / DSM 20229 / NCIMB 8711 / NCTC 7292 / S-41).